Consider the following 883-residue polypeptide: Valine--tRNA ligase (883 aa).

Residues 46-56 carry the 'HIGH' region motif; sequence PNVTGKLHLGH. The 'KMSKS' region signature appears at 520-524; it reads KMSKS. Position 523 (lysine 523) interacts with ATP. Residues 809–844 adopt a coiled-coil conformation; sequence LADLLNVEEELARLEKELAKWQKELDMVGKKLSNER.

This sequence belongs to the class-I aminoacyl-tRNA synthetase family. ValS type 1 subfamily. Monomer.

The protein localises to the cytoplasm. It carries out the reaction tRNA(Val) + L-valine + ATP = L-valyl-tRNA(Val) + AMP + diphosphate. Functionally, catalyzes the attachment of valine to tRNA(Val). As ValRS can inadvertently accommodate and process structurally similar amino acids such as threonine, to avoid such errors, it has a 'posttransfer' editing activity that hydrolyzes mischarged Thr-tRNA(Val) in a tRNA-dependent manner. The chain is Valine--tRNA ligase from Streptococcus agalactiae serotype V (strain ATCC BAA-611 / 2603 V/R).